A 390-amino-acid chain; its full sequence is 4-hydroxycoumarin synthase 1 (390 aa).

The active site involves Cys-161.

This sequence belongs to the thiolase-like superfamily. Chalcone/stilbene synthases family. As to quaternary structure, homodimer.

The catalysed reaction is 2-hydroxybenzoyl-CoA + malonyl-CoA = 4-hydroxycoumarin + CO2 + 2 CoA. Type III polyketide synthase involved preferentially in the biosynthesis of 4-hydroxycoumarin from salicoyl-CoA. Can also use benzoyl-CoA and malonyl-CoA to produce 3,5-dihydroxybiphenyl as a major product and benzoyldiacetic acid lactone as a minor side product. Can also use m-hydroxybenzoyl-CoA as substrate, producing m-hydroxybenzoyl diacetic acid lactone as a derailment product. No activity with p-hydroxybenzoyl-CoA, CoA-linked cinnamic acids or acetyl-CoA. The chain is 4-hydroxycoumarin synthase 1 (BIS2) from Sorbus aucuparia (European mountain ash).